Reading from the N-terminus, the 170-residue chain is Transcriptional repressor NrdR (170 aa).

Residues 3–34 (CPFCGTQDTKVVDSRLVSEGAQVRRRRTCIHC) fold into a zinc finger. Positions 49 to 139 (PKLIKSDGSR…VYRSFKDISE (91 aa)) constitute an ATP-cone domain. A disordered region spans residues 151–170 (SVSIPKSKKTAPESKKEDQA). A compositionally biased stretch (basic and acidic residues) spans 160-170 (TAPESKKEDQA).

It belongs to the NrdR family. Requires Zn(2+) as cofactor.

Negatively regulates transcription of bacterial ribonucleotide reductase nrd genes and operons by binding to NrdR-boxes. The chain is Transcriptional repressor NrdR from Marinomonas sp. (strain MWYL1).